A 58-amino-acid chain; its full sequence is MAEIKVKLVRSRIGASPAQRKLLDSLGLKRREMVKTFKDTPAIRGIIAKVPHMVAVVE.

It belongs to the universal ribosomal protein uL30 family. In terms of assembly, part of the 50S ribosomal subunit.

The protein is Large ribosomal subunit protein uL30 of Desulfovibrio desulfuricans (strain ATCC 27774 / DSM 6949 / MB).